A 115-amino-acid polypeptide reads, in one-letter code: Small ribosomal subunit protein bS6 (115 aa).

Belongs to the bacterial ribosomal protein bS6 family.

Binds together with bS18 to 16S ribosomal RNA. The protein is Small ribosomal subunit protein bS6 of Picosynechococcus sp. (strain ATCC 27264 / PCC 7002 / PR-6) (Agmenellum quadruplicatum).